The chain runs to 2531 residues: Highly reducing polyketide synthase gloL (2531 aa).

Positions 15–435 constitute a Ketosynthase family 3 (KS3) domain; that stretch reads YEPLAIVGMG…GANAHVILDS (421 aa). Active-site for beta-ketoacyl synthase activity residues include Cys-187, His-322, and His-358. Residues 449-525 are disordered; that stretch reads TNGLSVNGHS…GHSVNGHSKP (77 aa). The segment covering 453-503 has biased composition (low complexity); sequence SVNGHSINGNSVNGHSVNGHSTNGHSINGNSVNGHSVNGNSVNGHSTNGHS. Positions 505 to 521 are enriched in polar residues; sequence NGHSANGNSINGHSVNG. Positions 602-909 are malonyl-CoA:ACP transacylase (MAT) domain; sequence MVFTGQGAQW…VTALERGKDC (308 aa). Residues 971–1099 are N-terminal hotdog fold; it reads HEILGSRTVE…GQIRSGTDNP (129 aa). Residues 971–1251 form a dehydratase (DH) domain region; that stretch reads HEILGSRTVE…GGQFSPIEED (281 aa). Residues 971 to 1254 enclose the PKS/mFAS DH domain; sequence HEILGSRTVE…FSPIEEDSSD (284 aa). His-1003 acts as the Proton acceptor; for dehydratase activity in catalysis. The tract at residues 1109–1254 is C-terminal hotdog fold; that stretch reads DHPRSVPSPY…FSPIEEDSSD (146 aa). Asp-1169 (proton donor; for dehydratase activity) is an active-site residue. Positions 1419 to 1597 are methyltransferase (CMet) domain; it reads DFFTAAGHSK…FSGCDATVYD (179 aa). An enoyl reductase (ER) (ER) domain region spans residues 1806–2114; the sequence is GLLQTLRWVP…KGSHIGKIVV (309 aa). A ketoreductase (KR) domain region spans residues 2139-2312; that stretch reads GYLLVGGLGG…ASVVDIGVMG (174 aa). Positions 2413–2505 constitute a Carrier domain; sequence MSSVETDSSI…ALGLLTIEGL (93 aa). Position 2464 is an O-(pantetheine 4'-phosphoryl)serine (Ser-2464).

Its pathway is mycotoxin biosynthesis. Highly reducing polyketide synthase; part of the gene cluster that mediates the biosynthesis of pneumocandins, lipohexapeptides of the echinocandin family that prevent fungal cell wall formation by non-competitive inhibition of beta-1,3-glucan synthase. The 10,12-dimethylmyristoyl side chain is synthesized by the reducing polyketide synthase gloL/GLPKS4. The thioesterase gloN/GLHYD exclusively interacts with gloL/GLPKS4 to maintain turnover of the polyketide side chain. The 10R,12S-dimethylmyristic acid is then transferred to the first thiolation domain of the nonribosomal peptide synthetase gloA/GLNRPS4 by the acyl-AMP ligase gloD/GLligase, followed by its acylation to L-ornithine to trigger elongation of the cyclic hexapeptide. L-ornithine, 4R-hydroxyl-L-proline (generated from L-proline by the dioxygenase gloF/GLOXY2), 3S-hydroxyl-L-homotyrosine (generated by gloG/GLHtyB, gloH/GLHtyA, gloI/GLHtyC, gloJ/GLHtyD and hydroxylated at C-3 by the dioxygenase gloM/GLOXY1), 3R-hydroxyl-L-glutamine (generated from L-glutamine probably by the dioxygenase gloE/GLOXY3) and 3S-hydroxyl-L-proline (generated from L-proline by the dioxygenase gloF/GLOXY2 to yield pneumocandin B0), or 3S-hydroxyl-4S-methyl-L-proline (generated from L-leucine by the dioxygenase gloC/GLOXY4 to yield pneumocandin A0) are sequentially added to the growing chain. The last C domain of gloA/GLNRPS4 is proposed to be responsible for cyclization by condensation to form the peptide bond between L-ornithine and 3S-hydroxyl-4S-methyl-L-proline (for pneumocandin A0) or 3S-hydroxyl-L-proline (for pneumocandin B0). Finally, the subsequent C-4 hydroxylation of 3S-hydroxyl-L-homotyrosine and L-ornithine dihydroxylation at C-4 and C-5 are performed by the cytochrome P450 monooxygenases gloP/GLP450-1 and gloO/GLP450-2, respectively. The chain is Highly reducing polyketide synthase gloL from Glarea lozoyensis (strain ATCC 20868 / MF5171).